We begin with the raw amino-acid sequence, 447 residues long: Phosphoglucosamine mutase (447 aa).

S100 serves as the catalytic Phosphoserine intermediate. Mg(2+) is bound by residues S100, D239, D241, and D243. Phosphoserine is present on S100.

This sequence belongs to the phosphohexose mutase family. The cofactor is Mg(2+). Post-translationally, activated by phosphorylation.

The catalysed reaction is alpha-D-glucosamine 1-phosphate = D-glucosamine 6-phosphate. Catalyzes the conversion of glucosamine-6-phosphate to glucosamine-1-phosphate. This Dictyoglomus turgidum (strain DSM 6724 / Z-1310) protein is Phosphoglucosamine mutase.